Consider the following 40-residue polypeptide: Competence and sporulation stimulating factor (40 aa).

A propeptide spanning residues 1 to 35 (MKLKSKLFVICLAAAAIFTAAGVSANAEALDFHVT) is cleaved from the precursor.

Belongs to the Phr family. Interacts with RapC and inhibits its interaction with ComA. Post-translationally, secreted with a propeptide domain, which is cleaved in the cell wall by the secreted serine proteases subtilisin, Epr and Vpr to produce a mature signaling peptide. Contains a predicted signal peptide cleavage site in the N-terminal region, however the propeptide is probably subject to only one processing event, at the N-terminal end of the mature peptide.

It is found in the secreted. Its subcellular location is the cytoplasm. It localises to the host cell. Signaling molecule that serves as a cell density signal for both genetic competence development and sporulation. Secreted during production, but the mature peptide acts intracellularly, indicating that it needs to be imported into the cell to function. At low concentrations, CSF stimulates expression of the genes controlled by ComA, a transcriptional factor that regulates the development of genetic competence. It includes the srfA operon, which encodes a small protein, ComS, required for competence development, and the surfactin biosynthetic enzymes. Acts by inhibiting RapC, which regulates the activity of ComA. At high concentrations, it inhibits expression of those same ComA-controlled genes, maybe by inhibiting activity of the kinase ComP. In addition, high concentrations of CSF can stimulate sporulation under some conditions. Also inhibits RapB activity, with lower efficiency, but does not act on RapA. Is probably involved in the quorum sensing control of sporulation. CSF is a species-specific signaling molecule that partially compensates for the lack of ComX-mediated communication between different strains of B.subtilis. In terms of biological role, b.subtilis is a well-characterized soil and water saprophyte, but it is also found in enteric flora of many species, including humans. In this environment, CSF can be transported into human intestinal epithelia via OCTN2, a host cell membrane transporter, and can induce cytoprotective heat shock proteins contributing to intestinal homeostasis. Functionally, in addition, in non-domesticated swarming strains of B.subtilis, the residual propeptide exposed on the exterior of the cytoplasmic membrane may have an extracellular role in swarming. This function is probably not dependent on CSF. In Bacillus subtilis (strain 168), this protein is Competence and sporulation stimulating factor.